Here is a 130-residue protein sequence, read N- to C-terminus: Large ribosomal subunit protein bL20 (130 aa).

It belongs to the bacterial ribosomal protein bL20 family.

Its function is as follows. Binds directly to 23S ribosomal RNA and is necessary for the in vitro assembly process of the 50S ribosomal subunit. It is not involved in the protein synthesizing functions of that subunit. This chain is Large ribosomal subunit protein bL20, found in Solibacter usitatus (strain Ellin6076).